The chain runs to 279 residues: Phosphatidylglycerol--prolipoprotein diacylglyceryl transferase (279 aa).

The next 3 membrane-spanning stretches (helical) occupy residues 18 to 38 (LSVR…YFVA), 55 to 75 (IIFY…VIFQ), and 89 to 109 (IWHG…AGVI). Arg137 contributes to the a 1,2-diacyl-sn-glycero-3-phospho-(1'-sn-glycerol) binding site. Transmembrane regions (helical) follow at residues 203–223 (LGET…FIEG) and 235–255 (IRVA…LIVY).

It belongs to the Lgt family.

Its subcellular location is the cell membrane. It catalyses the reaction L-cysteinyl-[prolipoprotein] + a 1,2-diacyl-sn-glycero-3-phospho-(1'-sn-glycerol) = an S-1,2-diacyl-sn-glyceryl-L-cysteinyl-[prolipoprotein] + sn-glycerol 1-phosphate + H(+). It functions in the pathway protein modification; lipoprotein biosynthesis (diacylglyceryl transfer). Catalyzes the transfer of the diacylglyceryl group from phosphatidylglycerol to the sulfhydryl group of the N-terminal cysteine of a prolipoprotein, the first step in the formation of mature lipoproteins. The protein is Phosphatidylglycerol--prolipoprotein diacylglyceryl transferase of Staphylococcus aureus (strain Mu3 / ATCC 700698).